We begin with the raw amino-acid sequence, 147 residues long: Cysteine proteinase inhibitor 2 (147 aa).

Positions 1–27 (MATMLKVSLVLSLLGFLVIAVVTPSAA) are cleaved as a signal peptide. One can recognise a Cystatin domain in the interval 87–117 (LQFSRVVSAQKQVVAGLKYYLRIEVTQPNGS). Positions 98-102 (QVVAG) match the Secondary area of contact motif. N-linked (GlcNAc...) asparagine glycosylation occurs at Asn115.

The protein belongs to the cystatin family. Phytocystatin subfamily.

It localises to the secreted. Specific inhibitor of cysteine proteinases. Probably involved in the regulation of endogenous processes and in defense against pests and pathogens. The sequence is that of Cysteine proteinase inhibitor 2 (CYS2) from Arabidopsis thaliana (Mouse-ear cress).